Consider the following 811-residue polypeptide: Ribonucleoside-diphosphate reductase large subunit (811 aa).

Residues threonine 231, 246–247, glycine 277, 450–454, and 636–640 each bind substrate; these read SC, NLCTE, and PTASS. The cysteines at positions 247 and 467 are disulfide-linked. Asparagine 450 functions as the Proton acceptor in the catalytic mechanism. Cysteine 452 serves as the catalytic Cysteine radical intermediate. Catalysis depends on glutamate 454, which acts as the Proton acceptor.

It belongs to the ribonucleoside diphosphate reductase large chain family. Heterotetramer composed of a homodimer of the large subunit (R1) and a homodimer of the small subunit (R2). Larger multisubunit protein complex are also active, composed of (R1)n(R2)n.

The catalysed reaction is a 2'-deoxyribonucleoside 5'-diphosphate + [thioredoxin]-disulfide + H2O = a ribonucleoside 5'-diphosphate + [thioredoxin]-dithiol. Functionally, ribonucleoside-diphosphate reductase holoenzyme provides the precursors necessary for viral DNA synthesis. Allows virus growth in non-dividing cells, as well as reactivation from latency in infected hosts. Catalyzes the biosynthesis of deoxyribonucleotides from the corresponding ribonucleotides. This chain is Ribonucleoside-diphosphate reductase large subunit, found in Amazona oratrix (yellow-headed parrot).